The primary structure comprises 259 residues: Putative deoxyribonuclease TATDN1 homolog (259 aa).

The a divalent metal cation site is built by glutamate 82, histidine 116, histidine 138, and aspartate 186.

Belongs to the metallo-dependent hydrolases superfamily. TatD-type hydrolase family. A divalent metal cation is required as a cofactor.

It is found in the nucleus. Its function is as follows. Putative deoxyribonuclease. The chain is Putative deoxyribonuclease TATDN1 homolog from Vairimorpha ceranae (strain BRL01) (Microsporidian parasite).